The primary structure comprises 612 residues: Dihydroxy-acid dehydratase (612 aa).

Asp-81 contacts Mg(2+). Residue Cys-122 participates in [2Fe-2S] cluster binding. Residues Asp-123 and Lys-124 each contribute to the Mg(2+) site. Lys-124 is modified (N6-carboxylysine). A [2Fe-2S] cluster-binding site is contributed by Cys-195. Residue Glu-491 coordinates Mg(2+). The active-site Proton acceptor is the Ser-517.

This sequence belongs to the IlvD/Edd family. In terms of assembly, homodimer. The cofactor is [2Fe-2S] cluster. Requires Mg(2+) as cofactor.

The catalysed reaction is (2R)-2,3-dihydroxy-3-methylbutanoate = 3-methyl-2-oxobutanoate + H2O. It catalyses the reaction (2R,3R)-2,3-dihydroxy-3-methylpentanoate = (S)-3-methyl-2-oxopentanoate + H2O. The protein operates within amino-acid biosynthesis; L-isoleucine biosynthesis; L-isoleucine from 2-oxobutanoate: step 3/4. It functions in the pathway amino-acid biosynthesis; L-valine biosynthesis; L-valine from pyruvate: step 3/4. Functionally, functions in the biosynthesis of branched-chain amino acids. Catalyzes the dehydration of (2R,3R)-2,3-dihydroxy-3-methylpentanoate (2,3-dihydroxy-3-methylvalerate) into 2-oxo-3-methylpentanoate (2-oxo-3-methylvalerate) and of (2R)-2,3-dihydroxy-3-methylbutanoate (2,3-dihydroxyisovalerate) into 2-oxo-3-methylbutanoate (2-oxoisovalerate), the penultimate precursor to L-isoleucine and L-valine, respectively. The sequence is that of Dihydroxy-acid dehydratase from Haemophilus influenzae (strain 86-028NP).